A 399-amino-acid polypeptide reads, in one-letter code: uncharacterized protein (399 aa).

A disordered region spans residues 375 to 399 (AAGGHRGSHGKSEQAATVRVVDDRR).

The protein belongs to the mycobacterial PPE family.

This is an uncharacterized protein from Mycobacterium tuberculosis (strain CDC 1551 / Oshkosh).